Reading from the N-terminus, the 945-residue chain is Isoleucine--tRNA ligase (945 aa).

Residues 66–76 carry the 'HIGH' region motif; that stretch reads PYANGDIHLGH. L-isoleucyl-5'-AMP is bound at residue glutamate 581. A 'KMSKS' region motif is present at residues 622 to 626; it reads KMSKS. An ATP-binding site is contributed by lysine 625. Cysteine 908, cysteine 911, cysteine 928, and cysteine 931 together coordinate Zn(2+).

The protein belongs to the class-I aminoacyl-tRNA synthetase family. IleS type 1 subfamily. In terms of assembly, monomer. The cofactor is Zn(2+).

It is found in the cytoplasm. It carries out the reaction tRNA(Ile) + L-isoleucine + ATP = L-isoleucyl-tRNA(Ile) + AMP + diphosphate. Functionally, catalyzes the attachment of isoleucine to tRNA(Ile). As IleRS can inadvertently accommodate and process structurally similar amino acids such as valine, to avoid such errors it has two additional distinct tRNA(Ile)-dependent editing activities. One activity is designated as 'pretransfer' editing and involves the hydrolysis of activated Val-AMP. The other activity is designated 'posttransfer' editing and involves deacylation of mischarged Val-tRNA(Ile). The protein is Isoleucine--tRNA ligase of Burkholderia cenocepacia (strain ATCC BAA-245 / DSM 16553 / LMG 16656 / NCTC 13227 / J2315 / CF5610) (Burkholderia cepacia (strain J2315)).